A 349-amino-acid chain; its full sequence is Phosphoribosylformylglycinamidine cyclo-ligase (349 aa).

It belongs to the AIR synthase family.

It localises to the cytoplasm. The enzyme catalyses 2-formamido-N(1)-(5-O-phospho-beta-D-ribosyl)acetamidine + ATP = 5-amino-1-(5-phospho-beta-D-ribosyl)imidazole + ADP + phosphate + H(+). It functions in the pathway purine metabolism; IMP biosynthesis via de novo pathway; 5-amino-1-(5-phospho-D-ribosyl)imidazole from N(2)-formyl-N(1)-(5-phospho-D-ribosyl)glycinamide: step 2/2. The chain is Phosphoribosylformylglycinamidine cyclo-ligase from Bordetella petrii (strain ATCC BAA-461 / DSM 12804 / CCUG 43448).